The following is a 265-amino-acid chain: Orotidine 5'-phosphate decarboxylase (265 aa).

Residues aspartate 37, 59–61 (KTH), 91–100 (DRKFADIGNT), tyrosine 217, and arginine 236 contribute to the substrate site. Lysine 93 functions as the Proton donor in the catalytic mechanism.

This sequence belongs to the OMP decarboxylase family.

The enzyme catalyses orotidine 5'-phosphate + H(+) = UMP + CO2. It participates in pyrimidine metabolism; UMP biosynthesis via de novo pathway; UMP from orotate: step 2/2. The chain is Orotidine 5'-phosphate decarboxylase (URA3) from Saccharomycopsis fibuligera (Yeast).